We begin with the raw amino-acid sequence, 768 residues long: Cullin-3 (768 aa).

The residue at position 2 (serine 2) is an N-acetylserine. Residues serine 2–isoleucine 41 are interaction with KLHL18. Residue serine 585 is modified to Phosphoserine. The interval valine 677–aspartate 698 is disordered. Positions glycine 682–aspartate 698 are enriched in basic and acidic residues. A Cullin neddylation domain is found at aspartate 698 to aspartate 760. Lysine 712 participates in a covalent cross-link: Glycyl lysine isopeptide (Lys-Gly) (interchain with G-Cter in NEDD8).

The protein belongs to the cullin family. In terms of assembly, forms neddylation-dependent homodimers. Component of multiple BCR (BTB-CUL3-RBX1) E3 ubiquitin-protein ligase complexes formed of CUL3, RBX1 and a variable BTB domain-containing protein acting as both, adapter to cullin and substrate recognition subunit. The BCR complex may be active as a heterodimeric complex, in which NEDD8, covalently attached to one CUL3 molecule, binds to the C-terminus of a second CUL3 molecule. Interacts with RBX1, RNF7 and TIP120A/CAND1. Part of the BCR(SPOP) containing SPOP, and of BCR containing homodimeric SPOPL or the heterodimer formed by SPOP and SPOPL. Part of the probable BCR(KLHL9-KLHL13) complex with BTB domain proteins KLHL9 and KLHL13. Part of the BCR(KLHL41) complex containing KLHL41. Component of the BCR(KLHL12) E3 ubiquitin ligase complex, at least composed of CUL3 and KLHL12 and RBX1. Component of the BCR(KLHL3) E3 ubiquitin ligase complex, at least composed of CUL3 and KLHL3 and RBX1. Part of the BCR(ENC1) complex containing ENC1. Part of a complex consisting of BMI1/PCGF4, CUL3 and SPOP. Part of a complex consisting of BRMS1, CUL3 and SPOP. Component of the BCR(KLHL21) E3 ubiquitin ligase complex, at least composed of CUL3, KLHL21 and RBX1. Component of the BCR(KLHL22) E3 ubiquitin ligase complex, at least composed of CUL3, KLHL22 and RBX1. Component of the BCR(KLHL25) E3 ubiquitin ligase complex, at least composed of CUL3, KLHL25 and RBX1. Part of a complex consisting of MACROH2A1, CUL3 and SPOP. Component of the BCR(KLHL42) E3 ubiquitin ligase complex, at least composed of CUL3 and KLHL42. Component of the BCR(KBTBD8) E3 ubiquitin ligase complex, at least composed of CUL3, KBTBD8 and RBX1. Interacts with KLHL42 (via the BTB domain). Interacts with KATNA1; the interaction is enhanced by KLHL42. Interacts with KCTD5, KLHL9, KLHL11, KLHL13, GAN, ZBTB16, KLHL3, KLHL15, KLHL20, KLHL36, GMCL2, BTBD1. Part of a complex that contains CUL3, RBX1 and GAN. Interacts (via BTB domain) with KLHL17; the interaction regulates surface GRIK2 expression. Interacts with KCTD7. Part of the BCR(GAN) complex containing GAN. Part of the BCR(KEAP1) complex containing KEAP1. Interacts with KAT5 and ATF2. Interacts with KCTD17 in the BCR(KCTD17) E3 ubiquitin ligase complex, at least composed of CUL3, KCTD17 and RBX1. Interacts (when neddylated) with ARIH1; leading to activate the E3 ligase activity of ARIH1. Interacts with COPS9. Interacts with PPP2R5B; this interaction is indirect and mediated through KLHL15-binding and leads to PPP2R5B proteasomal degradation. Interacts with RBBP8/CtIP; this interaction is indirect and mediated through KLHL15-binding and leads to RBBP8 proteasomal degradation. Interacts with KLHL24 in the BCR(KLHL24) E3 ubiquitin ligase complex, composed of CUL3, RBX1 and KLHL24. Interacts with RHOBTB2. Interacts with CYCE. Interacts with KLHL10. Interacts with AURKA and KLHL18 (via BTB domain). Interacts (unneddylated form) with DCUN1D1, DCUN1D2, DCUN1D3, DCUN1D4 and DCUN1D5; these interactions promote the cullin neddylation. Component of a BCR3 (BTB-CUL3-RBX1) E3 ubiquitin ligase complex, also named Cul3-RING ubiquitin ligase complex CUL3(KBTBD6/7), composed of CUL3, RBX1, KBTBD6 and KBTBD7. Component of the BCR(KBTBD2) E3 ubiquitin ligase complex, at least composed of CUL3, KBTBD2 and RBX1. Interacts with KBTBD2 (via the BTB domain). Component of the BCR(KBTBD4) E3 ubiquitin ligase complex, at least composed of CUL3, KBTBD4 and RBX1. In terms of processing, neddylated. Attachment of NEDD8 is required for the E3 ubiquitin-protein ligase activity of the BCR complex. Deneddylated via its interaction with the COP9 signalosome (CSN) complex. As to expression, widely expressed, with highest expression in brain, spleen and testis. In the testis, it is mainly expressed in spermatids.

It is found in the nucleus. Its subcellular location is the golgi apparatus. It localises to the cell projection. The protein resides in the cilium. The protein localises to the flagellum. It is found in the cytoplasm. Its subcellular location is the cytoskeleton. It localises to the spindle. The protein resides in the microtubule organizing center. The protein localises to the centrosome. It is found in the spindle pole. The protein operates within protein modification; protein ubiquitination. Functionally, core component of multiple cullin-RING-based BCR (BTB-CUL3-RBX1) E3 ubiquitin-protein ligase complexes which mediate the ubiquitination and subsequent proteasomal degradation of target proteins. BCR complexes and ARIH1 collaborate in tandem to mediate ubiquitination of target proteins. As a scaffold protein may contribute to catalysis through positioning of the substrate and the ubiquitin-conjugating enzyme. The E3 ubiquitin-protein ligase activity of the complex is dependent on the neddylation of the cullin subunit and is inhibited by the association of the deneddylated cullin subunit with TIP120A/CAND1. The functional specificity of the BCR complex depends on the BTB domain-containing protein as the substrate recognition component. BCR(KLHL42) is involved in ubiquitination of KATNA1. BCR(SPOP) is involved in ubiquitination of BMI1/PCGF4, BRMS1, MACROH2A1 and DAXX, GLI2 and GLI3. Can also form a cullin-RING-based BCR (BTB-CUL3-RBX1) E3 ubiquitin-protein ligase complex containing homodimeric SPOPL or the heterodimer formed by SPOP and SPOPL; these complexes have lower ubiquitin ligase activity. BCR(KLHL9-KLHL13) controls the dynamic behavior of AURKB on mitotic chromosomes and thereby coordinates faithful mitotic progression and completion of cytokinesis. BCR(KLHL12) is involved in ER-Golgi transport by regulating the size of COPII coats, thereby playing a key role in collagen export, which is required for embryonic stem (ES) cells division: BCR(KLHL12) acts by mediating monoubiquitination of SEC31 (SEC31A or SEC31B). BCR(KLHL3) acts as a regulator of ion transport in the distal nephron; by mediating ubiquitination of WNK4. The BCR(KLHL20) E3 ubiquitin ligase complex is involved in interferon response and anterograde Golgi to endosome transport: it mediates both ubiquitination leading to degradation and 'Lys-33'-linked ubiquitination. The BCR(KLHL21) E3 ubiquitin ligase complex regulates localization of the chromosomal passenger complex (CPC) from chromosomes to the spindle midzone in anaphase and mediates the ubiquitination of AURKB. The BCR(KLHL22) ubiquitin ligase complex mediates monoubiquitination of PLK1, leading to PLK1 dissociation from phosphoreceptor proteins and subsequent removal from kinetochores, allowing silencing of the spindle assembly checkpoint (SAC) and chromosome segregation. The BCR(KLHL22) ubiquitin ligase complex is also responsible for the amino acid-stimulated 'Lys-48' polyubiquitination and proteasomal degradation of DEPDC5. Through the degradation of DEPDC5, releases the GATOR1 complex-mediated inhibition of the TORC1 pathway. The BCR(KLHL25) ubiquitin ligase complex is involved in translational homeostasis by mediating ubiquitination and subsequent degradation of hypophosphorylated EIF4EBP1 (4E-BP1). The BCR(KLHL25) ubiquitin ligase complex is also involved in lipid synthesis by mediating ubiquitination and degradation of ACLY. The BCR(KBTBD8) complex acts by mediating monoubiquitination of NOLC1 and TCOF1, leading to remodel the translational program of differentiating cells in favor of neural crest specification. Involved in ubiquitination of cyclin E and of cyclin D1 (in vitro) thus involved in regulation of G1/S transition. Involved in the ubiquitination of KEAP1, ENC1 and KLHL41. In concert with ATF2 and RBX1, promotes degradation of KAT5 thereby attenuating its ability to acetylate and activate ATM. The BCR(KCTD17) E3 ubiquitin ligase complex mediates ubiquitination and degradation of TCHP, a down-regulator of cilium assembly, thereby inducing ciliogenesis. The BCR(KLHL24) E3 ubiquitin ligase complex mediates ubiquitination of KRT14, controls KRT14 levels during keratinocytes differentiation, and is essential for skin integrity. The BCR(KLHL18) E3 ubiquitin ligase complex mediates the ubiquitination of AURKA leading to its activation at the centrosome which is required for initiating mitotic entry. The BCR(KEAP1) E3 ubiquitin ligase complex acts as a key sensor of oxidative and electrophilic stress by mediating ubiquitination and degradation of NFE2L2/NRF2, a transcription factor regulating expression of many cytoprotective genes. As part of the CUL3(KBTBD6/7) E3 ubiquitin ligase complex functions mediates 'Lys-48' ubiquitination and proteasomal degradation of TIAM1. By controlling the ubiquitination of that RAC1 guanine exchange factors (GEF), regulates RAC1 signal transduction and downstream biological processes including the organization of the cytoskeleton, cell migration and cell proliferation. The BCR(KBTBD4) E3 ubiquitin ligase complex targets CoREST corepressor complex components RCOR1, KDM1A/LSD1 and HDAC2 for proteasomal degradation with RCOR1 likely to be the primary target while degradation of KDM1A and HDAC2 is likely due to their association with RCOR1. It also targets RCOR3, MIER2 and MIER3 for proteasomal degradation as well as associated proteins ZNF217 and RREB1 with degradation being dependent on the presence of an ELM2 domain in the target proteins. The BCR(ARMC5) complex mediates premature transcription termination of transcripts that are unfavorably configured for transcriptional elongation by mediating ubiquitination of Pol II subunit POLR2A. Required for 'Lys-63'-linked ubiquitination of large ribosomal subunit protein MRPL12. The polypeptide is Cullin-3 (Cul3) (Mus musculus (Mouse)).